Reading from the N-terminus, the 473-residue chain is Argininosuccinate lyase (473 aa).

The protein belongs to the lyase 1 family. Argininosuccinate lyase subfamily.

The protein localises to the cytoplasm. It catalyses the reaction 2-(N(omega)-L-arginino)succinate = fumarate + L-arginine. It functions in the pathway amino-acid biosynthesis; L-arginine biosynthesis; L-arginine from L-ornithine and carbamoyl phosphate: step 3/3. In Nocardia farcinica (strain IFM 10152), this protein is Argininosuccinate lyase.